The chain runs to 236 residues: Pyridoxine 5'-phosphate synthase (236 aa).

Asparagine 6 provides a ligand contact to 3-amino-2-oxopropyl phosphate. Residue 8–9 coordinates 1-deoxy-D-xylulose 5-phosphate; sequence DH. Arginine 17 lines the 3-amino-2-oxopropyl phosphate pocket. The active-site Proton acceptor is histidine 42. Residues arginine 44 and histidine 49 each contribute to the 1-deoxy-D-xylulose 5-phosphate site. Glutamate 69 (proton acceptor) is an active-site residue. A 1-deoxy-D-xylulose 5-phosphate-binding site is contributed by threonine 99. Histidine 190 (proton donor) is an active-site residue. Residues glycine 191 and 212-213 each bind 3-amino-2-oxopropyl phosphate; that span reads GH.

This sequence belongs to the PNP synthase family. As to quaternary structure, homooctamer; tetramer of dimers.

The protein resides in the cytoplasm. It catalyses the reaction 3-amino-2-oxopropyl phosphate + 1-deoxy-D-xylulose 5-phosphate = pyridoxine 5'-phosphate + phosphate + 2 H2O + H(+). It functions in the pathway cofactor biosynthesis; pyridoxine 5'-phosphate biosynthesis; pyridoxine 5'-phosphate from D-erythrose 4-phosphate: step 5/5. In terms of biological role, catalyzes the complicated ring closure reaction between the two acyclic compounds 1-deoxy-D-xylulose-5-phosphate (DXP) and 3-amino-2-oxopropyl phosphate (1-amino-acetone-3-phosphate or AAP) to form pyridoxine 5'-phosphate (PNP) and inorganic phosphate. This chain is Pyridoxine 5'-phosphate synthase, found in Chloroherpeton thalassium (strain ATCC 35110 / GB-78).